The following is a 249-amino-acid chain: Pyridoxine 5'-phosphate synthase (249 aa).

Asparagine 7 provides a ligand contact to 3-amino-2-oxopropyl phosphate. 9–10 is a 1-deoxy-D-xylulose 5-phosphate binding site; the sequence is DH. Arginine 18 contributes to the 3-amino-2-oxopropyl phosphate binding site. Histidine 43 functions as the Proton acceptor in the catalytic mechanism. 1-deoxy-D-xylulose 5-phosphate contacts are provided by arginine 45 and histidine 50. The active-site Proton acceptor is glutamate 70. Residue threonine 100 coordinates 1-deoxy-D-xylulose 5-phosphate. The active-site Proton donor is the histidine 190. Residues glycine 191 and 212–213 each bind 3-amino-2-oxopropyl phosphate; that span reads GH.

It belongs to the PNP synthase family. As to quaternary structure, homooctamer; tetramer of dimers.

It is found in the cytoplasm. It catalyses the reaction 3-amino-2-oxopropyl phosphate + 1-deoxy-D-xylulose 5-phosphate = pyridoxine 5'-phosphate + phosphate + 2 H2O + H(+). The protein operates within cofactor biosynthesis; pyridoxine 5'-phosphate biosynthesis; pyridoxine 5'-phosphate from D-erythrose 4-phosphate: step 5/5. Functionally, catalyzes the complicated ring closure reaction between the two acyclic compounds 1-deoxy-D-xylulose-5-phosphate (DXP) and 3-amino-2-oxopropyl phosphate (1-amino-acetone-3-phosphate or AAP) to form pyridoxine 5'-phosphate (PNP) and inorganic phosphate. The sequence is that of Pyridoxine 5'-phosphate synthase from Synechococcus sp. (strain CC9902).